We begin with the raw amino-acid sequence, 156 residues long: Nuclear cap-binding protein subunit 2 (156 aa).

Residue Ser-2 is modified to N-acetylserine. A phosphoserine mark is found at Ser-13 and Ser-18. Residues Tyr-20, Tyr-43, 112–116 (RTDWD), 123–127 (RQYGR), and 133–134 (QV) contribute to the mRNA site. In terms of domain architecture, RRM spans 40–118 (CTLYVGNLSF…RIIRTDWDAG (79 aa)). The segment at 124–156 (QYGRGRSGGQVRDEYREDYDAGRGGYGKLAQKQ) is disordered. Positions 134–144 (VRDEYREDYDA) are enriched in basic and acidic residues. Arg-146 bears the Omega-N-methylarginine mark.

Belongs to the RRM NCBP2 family. As to quaternary structure, component of the nuclear cap-binding complex (CBC), a heterodimer composed of NCBP1/CBP80 and NCBP2/CBP20 that interacts with m7GpppG-capped RNA. Found in a U snRNA export complex with PHAX/RNUXA, NCBP1/CBP80, NCBP2/CBP20, RAN, XPO1 and m7G-capped RNA. Interacts with PHAX/RNUXA, EIF4G1, HNRNPF, HNRNPH1 and ALYREF/THOC4/ALY. Interacts with SRRT/ARS2 and KPNA3.

Its subcellular location is the nucleus. It localises to the cytoplasm. Component of the cap-binding complex (CBC), which binds co-transcriptionally to the 5' cap of pre-mRNAs and is involved in various processes such as pre-mRNA splicing, translation regulation, nonsense-mediated mRNA decay, RNA-mediated gene silencing (RNAi) by microRNAs (miRNAs) and mRNA export. The CBC complex is involved in mRNA export from the nucleus via its interaction with ALYREF/THOC4/ALY, leading to the recruitment of the mRNA export machinery to the 5' end of mRNA and to mRNA export in a 5' to 3' direction through the nuclear pore. The CBC complex is also involved in mediating U snRNA and intronless mRNAs export from the nucleus. The CBC complex is essential for a pioneer round of mRNA translation, before steady state translation when the CBC complex is replaced by cytoplasmic cap-binding protein eIF4E. The pioneer round of mRNA translation mediated by the CBC complex plays a central role in nonsense-mediated mRNA decay (NMD), NMD only taking place in mRNAs bound to the CBC complex, but not on eIF4E-bound mRNAs. The CBC complex enhances NMD in mRNAs containing at least one exon-junction complex (EJC) via its interaction with UPF1, promoting the interaction between UPF1 and UPF2. The CBC complex is also involved in 'failsafe' NMD, which is independent of the EJC complex, while it does not participate in Staufen-mediated mRNA decay (SMD). During cell proliferation, the CBC complex is also involved in microRNAs (miRNAs) biogenesis via its interaction with SRRT/ARS2, thereby being required for miRNA-mediated RNA interference. The CBC complex also acts as a negative regulator of PARN, thereby acting as an inhibitor of mRNA deadenylation. In the CBC complex, NCBP2/CBP20 recognizes and binds capped RNAs (m7GpppG-capped RNA) but requires NCBP1/CBP80 to stabilize the movement of its N-terminal loop and lock the CBC into a high affinity cap-binding state with the cap structure. The conventional cap-binding complex with NCBP2 binds both small nuclear RNA (snRNA) and messenger (mRNA) and is involved in their export from the nucleus. This is Nuclear cap-binding protein subunit 2 (Ncbp2) from Mus musculus (Mouse).